A 384-amino-acid polypeptide reads, in one-letter code: Cell division protein FtsZ (384 aa).

Residues 20-24, 107-109, glutamate 138, arginine 142, and asparagine 186 each bind GTP; these read GGGSN and GTG.

The protein belongs to the FtsZ family. In terms of assembly, homodimer. Polymerizes to form a dynamic ring structure in a strictly GTP-dependent manner. Interacts directly with several other division proteins.

Its subcellular location is the cytoplasm. Essential cell division protein that forms a contractile ring structure (Z ring) at the future cell division site. The regulation of the ring assembly controls the timing and the location of cell division. One of the functions of the FtsZ ring is to recruit other cell division proteins to the septum to produce a new cell wall between the dividing cells. Binds GTP and shows GTPase activity. The chain is Cell division protein FtsZ from Buchnera aphidicola subsp. Acyrthosiphon pisum (strain APS) (Acyrthosiphon pisum symbiotic bacterium).